The following is a 620-amino-acid chain: Chaperone protein HscA homolog (620 aa).

It belongs to the heat shock protein 70 family.

Functionally, chaperone involved in the maturation of iron-sulfur cluster-containing proteins. Has a low intrinsic ATPase activity which is markedly stimulated by HscB. The sequence is that of Chaperone protein HscA homolog from Pseudomonas savastanoi pv. phaseolicola (strain 1448A / Race 6) (Pseudomonas syringae pv. phaseolicola (strain 1448A / Race 6)).